Here is a 292-residue protein sequence, read N- to C-terminus: 4-diphosphocytidyl-2-C-methyl-D-erythritol kinase (292 aa).

K20 is an active-site residue. 103 to 113 is a binding site for ATP; sequence PMGGGIGGGSS. The active site involves D145.

The protein belongs to the GHMP kinase family. IspE subfamily.

It catalyses the reaction 4-CDP-2-C-methyl-D-erythritol + ATP = 4-CDP-2-C-methyl-D-erythritol 2-phosphate + ADP + H(+). The protein operates within isoprenoid biosynthesis; isopentenyl diphosphate biosynthesis via DXP pathway; isopentenyl diphosphate from 1-deoxy-D-xylulose 5-phosphate: step 3/6. Functionally, catalyzes the phosphorylation of the position 2 hydroxy group of 4-diphosphocytidyl-2C-methyl-D-erythritol. The polypeptide is 4-diphosphocytidyl-2-C-methyl-D-erythritol kinase (Cupriavidus necator (strain ATCC 17699 / DSM 428 / KCTC 22496 / NCIMB 10442 / H16 / Stanier 337) (Ralstonia eutropha)).